Here is a 380-residue protein sequence, read N- to C-terminus: 2-aminoethylphosphonate--pyruvate transaminase (380 aa).

At K204 the chain carries N6-(pyridoxal phosphate)lysine.

This sequence belongs to the class-V pyridoxal-phosphate-dependent aminotransferase family. PhnW subfamily. Homodimer. Requires pyridoxal 5'-phosphate as cofactor.

It catalyses the reaction (2-aminoethyl)phosphonate + pyruvate = phosphonoacetaldehyde + L-alanine. In terms of biological role, involved in phosphonate degradation. The sequence is that of 2-aminoethylphosphonate--pyruvate transaminase from Aeromonas hydrophila subsp. hydrophila (strain ATCC 7966 / DSM 30187 / BCRC 13018 / CCUG 14551 / JCM 1027 / KCTC 2358 / NCIMB 9240 / NCTC 8049).